Reading from the N-terminus, the 258-residue chain is Pyridoxine 5'-phosphate synthase (258 aa).

N6 is a 3-amino-2-oxopropyl phosphate binding site. Position 8–9 (8–9) interacts with 1-deoxy-D-xylulose 5-phosphate; sequence DH. 3-amino-2-oxopropyl phosphate is bound at residue R17. H42 acts as the Proton acceptor in catalysis. 1-deoxy-D-xylulose 5-phosphate is bound by residues R44 and H49. E69 serves as the catalytic Proton acceptor. Residue T99 participates in 1-deoxy-D-xylulose 5-phosphate binding. H213 functions as the Proton donor in the catalytic mechanism. 3-amino-2-oxopropyl phosphate-binding positions include G214 and 235-236; that span reads GQ.

Belongs to the PNP synthase family. In terms of assembly, homooctamer; tetramer of dimers.

It is found in the cytoplasm. The catalysed reaction is 3-amino-2-oxopropyl phosphate + 1-deoxy-D-xylulose 5-phosphate = pyridoxine 5'-phosphate + phosphate + 2 H2O + H(+). It functions in the pathway cofactor biosynthesis; pyridoxine 5'-phosphate biosynthesis; pyridoxine 5'-phosphate from D-erythrose 4-phosphate: step 5/5. Its function is as follows. Catalyzes the complicated ring closure reaction between the two acyclic compounds 1-deoxy-D-xylulose-5-phosphate (DXP) and 3-amino-2-oxopropyl phosphate (1-amino-acetone-3-phosphate or AAP) to form pyridoxine 5'-phosphate (PNP) and inorganic phosphate. This is Pyridoxine 5'-phosphate synthase from Sulfurovum sp. (strain NBC37-1).